Consider the following 316-residue polypeptide: Lipoyl synthase (316 aa).

Residues cysteine 60, cysteine 65, cysteine 71, cysteine 86, cysteine 90, cysteine 93, and serine 297 each coordinate [4Fe-4S] cluster. One can recognise a Radical SAM core domain in the interval tryptophan 72–threonine 286.

It belongs to the radical SAM superfamily. Lipoyl synthase family. The cofactor is [4Fe-4S] cluster.

The protein resides in the cytoplasm. The enzyme catalyses [[Fe-S] cluster scaffold protein carrying a second [4Fe-4S](2+) cluster] + N(6)-octanoyl-L-lysyl-[protein] + 2 oxidized [2Fe-2S]-[ferredoxin] + 2 S-adenosyl-L-methionine + 4 H(+) = [[Fe-S] cluster scaffold protein] + N(6)-[(R)-dihydrolipoyl]-L-lysyl-[protein] + 4 Fe(3+) + 2 hydrogen sulfide + 2 5'-deoxyadenosine + 2 L-methionine + 2 reduced [2Fe-2S]-[ferredoxin]. Its pathway is protein modification; protein lipoylation via endogenous pathway; protein N(6)-(lipoyl)lysine from octanoyl-[acyl-carrier-protein]: step 2/2. Functionally, catalyzes the radical-mediated insertion of two sulfur atoms into the C-6 and C-8 positions of the octanoyl moiety bound to the lipoyl domains of lipoate-dependent enzymes, thereby converting the octanoylated domains into lipoylated derivatives. The sequence is that of Lipoyl synthase from Nocardioides sp. (strain ATCC BAA-499 / JS614).